Consider the following 274-residue polypeptide: 4-diphosphocytidyl-2-C-methyl-D-erythritol kinase (274 aa).

Lys8 is a catalytic residue. An ATP-binding site is contributed by 94–104; it reads PSGAGLGGGSA. Asp136 is an active-site residue.

The protein belongs to the GHMP kinase family. IspE subfamily.

It carries out the reaction 4-CDP-2-C-methyl-D-erythritol + ATP = 4-CDP-2-C-methyl-D-erythritol 2-phosphate + ADP + H(+). It functions in the pathway isoprenoid biosynthesis; isopentenyl diphosphate biosynthesis via DXP pathway; isopentenyl diphosphate from 1-deoxy-D-xylulose 5-phosphate: step 3/6. Functionally, catalyzes the phosphorylation of the position 2 hydroxy group of 4-diphosphocytidyl-2C-methyl-D-erythritol. This Bacteroides fragilis (strain YCH46) protein is 4-diphosphocytidyl-2-C-methyl-D-erythritol kinase.